Here is a 370-residue protein sequence, read N- to C-terminus: Phosphoserine aminotransferase (370 aa).

Residue Arg-38 coordinates L-glutamate. Pyridoxal 5'-phosphate-binding residues include Trp-101, Thr-143, Asp-166, and Gln-189. At Lys-190 the chain carries N6-(pyridoxal phosphate)lysine. 243–244 (NT) provides a ligand contact to pyridoxal 5'-phosphate.

This sequence belongs to the class-V pyridoxal-phosphate-dependent aminotransferase family. SerC subfamily. Homodimer. It depends on pyridoxal 5'-phosphate as a cofactor.

The protein localises to the cytoplasm. The catalysed reaction is O-phospho-L-serine + 2-oxoglutarate = 3-phosphooxypyruvate + L-glutamate. It catalyses the reaction 4-(phosphooxy)-L-threonine + 2-oxoglutarate = (R)-3-hydroxy-2-oxo-4-phosphooxybutanoate + L-glutamate. It participates in amino-acid biosynthesis; L-serine biosynthesis; L-serine from 3-phospho-D-glycerate: step 2/3. Its pathway is cofactor biosynthesis; pyridoxine 5'-phosphate biosynthesis; pyridoxine 5'-phosphate from D-erythrose 4-phosphate: step 3/5. Functionally, catalyzes the reversible conversion of 3-phosphohydroxypyruvate to phosphoserine and of 3-hydroxy-2-oxo-4-phosphonooxybutanoate to phosphohydroxythreonine. The sequence is that of Phosphoserine aminotransferase (serC) from Methanosarcina barkeri (strain Fusaro / DSM 804).